The sequence spans 801 residues: Heavy metal tolerance factor 1 (801 aa).

Topologically, residues Met-1–Lys-24 are lumenal. The chain crosses the membrane as a helical span at residues Ile-25–Pro-45. Topologically, residues Asn-46–Ser-75 are cytoplasmic. Residues Ile-76–Phe-96 traverse the membrane as a helical segment. Topologically, residues His-97–His-101 are lumenal. The chain crosses the membrane as a helical span at residues Leu-102–Ser-122. Residues Lys-123–Ser-129 are Cytoplasmic-facing. A helical transmembrane segment spans residues Thr-130–Thr-150. Residues Asp-151–Thr-167 are Lumenal-facing. A helical membrane pass occupies residues Phe-168–Leu-188. Over Phe-189 to Arg-226 the chain is Cytoplasmic. The chain crosses the membrane as a helical span at residues Val-227–Leu-247. The ABC transmembrane type-1 domain maps to Val-227–Lys-516. At Ser-248–Ser-264 the chain is on the lumenal side. A helical transmembrane segment spans residues Leu-265 to Leu-285. At Asn-286–Asn-341 the chain is on the cytoplasmic side. The helical transmembrane segment at Ile-342–Phe-364 threads the bilayer. Residues Phe-365–Tyr-371 are Lumenal-facing. A helical membrane pass occupies residues Phe-372–Ile-390. Topologically, residues Thr-391–Asn-461 are cytoplasmic. Residues Ala-462–Glu-482 form a helical membrane-spanning segment. Residues Lys-483–Asp-489 lie on the Lumenal side of the membrane. Residues Tyr-490–Ile-510 traverse the membrane as a helical segment. Over Tyr-511 to Pro-801 the chain is Cytoplasmic. One can recognise an ABC transporter domain in the interval Ile-550 to Ala-784. Gly-583–Ser-590 contributes to the ATP binding site.

This sequence belongs to the ABC transporter superfamily. ABCB family. Heavy Metal importer (TC 3.A.1.210) subfamily. Expressed in coelomocytes, as well as in head and tail neurons, and in the intestinal cells.

It localises to the vacuole membrane. Its subcellular location is the early endosome. The protein localises to the late endosome. The protein resides in the recycling endosome. In terms of biological role, may play a pivotal role in the detoxification of heavy metals such as cadmium but do not depend exclusively on phytochelatins (PC) synthesis. In Caenorhabditis elegans, this protein is Heavy metal tolerance factor 1.